Here is a 273-residue protein sequence, read N- to C-terminus: Large ribosomal subunit protein uL2cz/uL2cy (273 aa).

Disordered regions lie at residues 1–22 and 225–273; these read MAKH…DRQV and PVDH…RRRK.

This sequence belongs to the universal ribosomal protein uL2 family. In terms of assembly, part of the 50S ribosomal subunit.

Its subcellular location is the plastid. The protein resides in the chloroplast. The chain is Large ribosomal subunit protein uL2cz/uL2cy (rpl2-A) from Zea mays (Maize).